The primary structure comprises 501 residues: ATP synthase subunit alpha (501 aa).

169–176 serves as a coordination point for ATP; sequence GDRQTGKT.

The protein belongs to the ATPase alpha/beta chains family. In terms of assembly, F-type ATPases have 2 components, CF(1) - the catalytic core - and CF(0) - the membrane proton channel. CF(1) has five subunits: alpha(3), beta(3), gamma(1), delta(1), epsilon(1). CF(0) has three main subunits: a(1), b(2) and c(9-12). The alpha and beta chains form an alternating ring which encloses part of the gamma chain. CF(1) is attached to CF(0) by a central stalk formed by the gamma and epsilon chains, while a peripheral stalk is formed by the delta and b chains.

The protein resides in the cell membrane. It catalyses the reaction ATP + H2O + 4 H(+)(in) = ADP + phosphate + 5 H(+)(out). Its function is as follows. Produces ATP from ADP in the presence of a proton gradient across the membrane. The alpha chain is a regulatory subunit. This is ATP synthase subunit alpha from Streptococcus equi subsp. equi (strain 4047).